We begin with the raw amino-acid sequence, 293 residues long: MPELPEVETVRRGLQPFMEGATVVRVEQNRPDLRFAFPENFAERLSGRRIEALGRRAKYLTVHLDDGLSIISHLGMSGSFRIEAEDAQGLPGGFHHERSKNSLHDHVVFHLMRPDGASARIIYNDPRRFGFMLFAEKGALEEHPLLKDLGVEPTGNLLSGEVLAALFKGRRTPLKAALLDQRLIAGLGNIYVCEALWRPGLSPMRAAGSVAGEMDVMERLAGAIRSVIAQAIAAGGSSLKDYIQADGALGYFQHSFSVYGREGKPCRNPACGGTVERVVQSGRSTFFCASCQT.

P2 serves as the catalytic Schiff-base intermediate with DNA. E3 serves as the catalytic Proton donor. Catalysis depends on K58, which acts as the Proton donor; for beta-elimination activity. Residues H104, R127, and R170 each coordinate DNA. An FPG-type zinc finger spans residues 257–293 (SVYGREGKPCRNPACGGTVERVVQSGRSTFFCASCQT). Catalysis depends on R283, which acts as the Proton donor; for delta-elimination activity.

The protein belongs to the FPG family. As to quaternary structure, monomer. It depends on Zn(2+) as a cofactor.

The catalysed reaction is Hydrolysis of DNA containing ring-opened 7-methylguanine residues, releasing 2,6-diamino-4-hydroxy-5-(N-methyl)formamidopyrimidine.. It catalyses the reaction 2'-deoxyribonucleotide-(2'-deoxyribose 5'-phosphate)-2'-deoxyribonucleotide-DNA = a 3'-end 2'-deoxyribonucleotide-(2,3-dehydro-2,3-deoxyribose 5'-phosphate)-DNA + a 5'-end 5'-phospho-2'-deoxyribonucleoside-DNA + H(+). Its function is as follows. Involved in base excision repair of DNA damaged by oxidation or by mutagenic agents. Acts as a DNA glycosylase that recognizes and removes damaged bases. Has a preference for oxidized purines, such as 7,8-dihydro-8-oxoguanine (8-oxoG). Has AP (apurinic/apyrimidinic) lyase activity and introduces nicks in the DNA strand. Cleaves the DNA backbone by beta-delta elimination to generate a single-strand break at the site of the removed base with both 3'- and 5'-phosphates. The polypeptide is Formamidopyrimidine-DNA glycosylase (Brucella melitensis biotype 1 (strain ATCC 23456 / CCUG 17765 / NCTC 10094 / 16M)).